Reading from the N-terminus, the 515-residue chain is Methionine--tRNA ligase (515 aa).

The short motif at 13-23 (AYPNGKPHIGH) is the 'HIGH' region element. The 'KMSKS' region signature appears at 300–304 (KMSKS). Lysine 303 is a binding site for ATP.

Belongs to the class-I aminoacyl-tRNA synthetase family. MetG type 2B subfamily. In terms of assembly, monomer.

Its subcellular location is the cytoplasm. The catalysed reaction is tRNA(Met) + L-methionine + ATP = L-methionyl-tRNA(Met) + AMP + diphosphate. Its function is as follows. Is required not only for elongation of protein synthesis but also for the initiation of all mRNA translation through initiator tRNA(fMet) aminoacylation. This chain is Methionine--tRNA ligase, found in Brucella suis biovar 1 (strain 1330).